The chain runs to 205 residues: Small ribosomal subunit protein uS4 (205 aa).

The interval 18 to 46 (NIWGRPKSPVNSRAYGPGQHGQRRKSKVS) is disordered. The 62-residue stretch at 94–155 (SRLDAVVYRA…RSRNMALVLE (62 aa)) folds into the S4 RNA-binding domain.

Belongs to the universal ribosomal protein uS4 family. Part of the 30S ribosomal subunit. Contacts protein S5. The interaction surface between S4 and S5 is involved in control of translational fidelity.

One of the primary rRNA binding proteins, it binds directly to 16S rRNA where it nucleates assembly of the body of the 30S subunit. Its function is as follows. With S5 and S12 plays an important role in translational accuracy. The polypeptide is Small ribosomal subunit protein uS4 (Phenylobacterium zucineum (strain HLK1)).